We begin with the raw amino-acid sequence, 473 residues long: tRNA modification GTPase MnmE (473 aa).

Residues R28, E93, and R132 each contribute to the (6S)-5-formyl-5,6,7,8-tetrahydrofolate site. Residues 228-394 (GVATVLVGSP…LKQQMSNMVA (167 aa)) enclose the TrmE-type G domain. GTP is bound by residues 238–243 (NAGKST), 257–263 (SHQPGTT), and 282–285 (DTAG). S242 and T263 together coordinate Mg(2+). A (6S)-5-formyl-5,6,7,8-tetrahydrofolate-binding site is contributed by K473.

This sequence belongs to the TRAFAC class TrmE-Era-EngA-EngB-Septin-like GTPase superfamily. TrmE GTPase family. Homodimer. Heterotetramer of two MnmE and two MnmG subunits. The cofactor is K(+).

The protein resides in the cytoplasm. Exhibits a very high intrinsic GTPase hydrolysis rate. Involved in the addition of a carboxymethylaminomethyl (cmnm) group at the wobble position (U34) of certain tRNAs, forming tRNA-cmnm(5)s(2)U34. This Chlorobium chlorochromatii (strain CaD3) protein is tRNA modification GTPase MnmE.